The chain runs to 714 residues: MEMTSAFTLNVRLDNIAVITIDVPGEKMNTLKAEFASQVRAIIKQLRENKELRGVVFVSAKPDNFIAGADINMIGNCKTAQEAEALARQGQQLMAEIHALPIQVIAAIHGACLGGGLELALACHGRVCTDDPKTVLGLPEVQLGLLPGSGGTQRLPRLIGVSTALEMILTGKQLRAKQALKLGLVDDVVPHSILLEAAVELAKKERPSSRPLPVRERILAGPLGRALLFKMVGKKTEHKTQGNYPATERILEVVETGLAQGTSSGYDAEARAFGELAMTPQSQALRSIFFASTDVKKDPGSDAPPAPLNSVGILGGGLMGGGIAYVTACKAGIPVRIKDINPQGINHALKYSWDQLEGKVRRRHLKASERDKQLALISGTTDYRGFAHRDLIIEAVFENLELKQQMVAEVEQNCAAHTIFASNTSSLPIGDIAAHATRPEQVIGLHFFSPVEKMPLVEIIPHAGTSAQTIATTVKLAKKQGKTPIVVRDKAGFYVNRILAPYINEAIRMLTQGERVEHIDAALVKFGFPVGPIQLLDEVGIDTGTKIIPVLEAAYGERFSAPANVVSSILNDDRKGRKNGRGFYLYGQKGRKSKKQVDPAIYPLIGTQGQGRISAPQVAERCVMLMLNEAVRCVDEQVIRSVRDGDIGAVFGIGFPPFLGGPFRYIDSLGAGEVVAIMQRLATQYGSRFTPCERLVEMGARGESFWKTTATDLQ.

Positions 1-190 (MEMTSAFTLN…KLGLVDDVVP (190 aa)) are enoyl-CoA hydratase. The segment at 306–714 (APLNSVGILG…FWKTTATDLQ (409 aa)) is 3-hydroxyacyl-CoA dehydrogenase.

The protein in the N-terminal section; belongs to the enoyl-CoA hydratase/isomerase family. This sequence in the central section; belongs to the 3-hydroxyacyl-CoA dehydrogenase family. In terms of assembly, heterotetramer of two alpha chains (FadJ) and two beta chains (FadI).

The protein localises to the cytoplasm. The catalysed reaction is a (3S)-3-hydroxyacyl-CoA = a (2E)-enoyl-CoA + H2O. It carries out the reaction a 4-saturated-(3S)-3-hydroxyacyl-CoA = a (3E)-enoyl-CoA + H2O. It catalyses the reaction a (3S)-3-hydroxyacyl-CoA + NAD(+) = a 3-oxoacyl-CoA + NADH + H(+). The enzyme catalyses (3S)-3-hydroxybutanoyl-CoA = (3R)-3-hydroxybutanoyl-CoA. Its pathway is lipid metabolism; fatty acid beta-oxidation. Functionally, catalyzes the formation of a hydroxyacyl-CoA by addition of water on enoyl-CoA. Also exhibits 3-hydroxyacyl-CoA epimerase and 3-hydroxyacyl-CoA dehydrogenase activities. Strongly involved in the anaerobic degradation of long and medium-chain fatty acids in the presence of nitrate and weakly involved in the aerobic degradation of long-chain fatty acids. In Escherichia coli (strain K12), this protein is Fatty acid oxidation complex subunit alpha (fadJ).